The sequence spans 170 residues: MIRSIIKSSNNLLKSNVAINSNKRFFATEASATSDLLTFSLLSPHQTIYKDKKAQLVTLPGAKGIFGVAKNHVPRIAELKPGVIQINHENGDLEKFFISGGFAFVNPDASCYINTIEAVPIDQLDAEEVKNGLARYTQLYNDAQEENAKAVALIGLETYQQMAFACGVSA.

A mitochondrion-targeting transit peptide spans 1–33 (MIRSIIKSSNNLLKSNVAINSNKRFFATEASAT).

Belongs to the ATPase epsilon chain family. As to quaternary structure, component of the ATP synthase complex composed at least of ATP5F1A/subunit alpha, ATP5F1B/subunit beta, ATP5MC1/subunit c (homooctomer), MT-ATP6/subunit a, MT-ATP8/subunit 8, ATP5ME/subunit e, ATP5MF/subunit f, ATP5MG/subunit g, ATP5MK/subunit k, ATP5MJ/subunit j, ATP5F1C/subunit gamma, ATP5F1D/subunit delta, ATP5F1E/subunit epsilon, ATP5PF/subunit F6, ATP5PB/subunit b, ATP5PD/subunit d, ATP5PO/subunit OSCP. ATP synthase complex consists of a soluble F(1) head domain (subunits alpha(3) and beta(3)) - the catalytic core - and a membrane F(0) domain - the membrane proton channel (subunits c, a, 8, e, f, g, k and j). These two domains are linked by a central stalk (subunits gamma, delta, and epsilon) rotating inside the F1 region and a stationary peripheral stalk (subunits F6, b, d, and OSCP).

It localises to the mitochondrion. The protein resides in the mitochondrion inner membrane. Subunit delta, of the mitochondrial membrane ATP synthase complex (F(1)F(0) ATP synthase or Complex V) that produces ATP from ADP in the presence of a proton gradient across the membrane which is generated by electron transport complexes of the respiratory chain. ATP synthase complex consist of a soluble F(1) head domain - the catalytic core - and a membrane F(1) domain - the membrane proton channel. These two domains are linked by a central stalk rotating inside the F(1) region and a stationary peripheral stalk. During catalysis, ATP synthesis in the catalytic domain of F(1) is coupled via a rotary mechanism of the central stalk subunits to proton translocation. In vivo, can only synthesize ATP although its ATP hydrolase activity can be activated artificially in vitro. With the central stalk subunit gamma, is essential for the biogenesis of F(1) catalytic part of the ATP synthase complex namely in the formation of F1 assembly intermediate. The chain is ATP synthase F(1) complex subunit delta, mitochondrial from Dictyostelium discoideum (Social amoeba).